The following is a 35-amino-acid chain: MPRRRRRASRPVRRRRRARRSTAVRRRRRVVRRRR.

Positions 1–35 (MPRRRRRASRPVRRRRRARRSTAVRRRRRVVRRRR) are disordered. A phosphoserine mark is found at S9 and S21.

Post-translationally, phosphorylated in immature sperm. Dephosphorylated in mature sperm allowing a stronger interaction with DNA. In terms of tissue distribution, gonads.

The protein resides in the nucleus. Its subcellular location is the chromosome. In terms of biological role, protamines substitute for histones in the chromatin of sperm during the haploid phase of spermatogenesis. They compact sperm DNA into a highly condensed, stable and inactive complex. The sequence is that of Sperm protamine alpha isoform 1 from Scomber scombrus (Atlantic mackerel).